The primary structure comprises 314 residues: Homoserine O-acetyltransferase (314 aa).

Cysteine 142 acts as the Acyl-thioester intermediate in catalysis. The substrate site is built by lysine 163 and serine 192. The active-site Proton acceptor is histidine 235. Residue glutamate 237 is part of the active site. A substrate-binding site is contributed by arginine 249.

It belongs to the MetA family.

It localises to the cytoplasm. It catalyses the reaction L-homoserine + acetyl-CoA = O-acetyl-L-homoserine + CoA. It participates in amino-acid biosynthesis; L-methionine biosynthesis via de novo pathway; O-acetyl-L-homoserine from L-homoserine: step 1/1. Functionally, transfers an acetyl group from acetyl-CoA to L-homoserine, forming acetyl-L-homoserine. This Streptococcus thermophilus (strain ATCC BAA-491 / LMD-9) protein is Homoserine O-acetyltransferase.